Reading from the N-terminus, the 626-residue chain is ATP-dependent zinc metalloprotease FtsH (626 aa).

Topologically, residues methionine 1–asparagine 7 are cytoplasmic. Residues tyrosine 8–phenylalanine 28 traverse the membrane as a helical segment. Over tyrosine 29 to serine 108 the chain is Periplasmic. Residues phenylalanine 109–phenylalanine 129 form a helical membrane-spanning segment. The Cytoplasmic portion of the chain corresponds to methionine 130–serine 626. Residue glycine 202–threonine 209 coordinates ATP. Zn(2+) is bound at residue histidine 424. Residue glutamate 425 is part of the active site. Zn(2+) is bound by residues histidine 428 and aspartate 501.

The protein in the central section; belongs to the AAA ATPase family. In the C-terminal section; belongs to the peptidase M41 family. Homohexamer. The cofactor is Zn(2+).

The protein resides in the cell inner membrane. Functionally, acts as a processive, ATP-dependent zinc metallopeptidase for both cytoplasmic and membrane proteins. Plays a role in the quality control of integral membrane proteins. This is ATP-dependent zinc metalloprotease FtsH from Pseudothermotoga lettingae (strain ATCC BAA-301 / DSM 14385 / NBRC 107922 / TMO) (Thermotoga lettingae).